The sequence spans 88 residues: UPF0250 protein swp_3927 (88 aa).

The protein belongs to the UPF0250 family.

The protein is UPF0250 protein swp_3927 of Shewanella piezotolerans (strain WP3 / JCM 13877).